The chain runs to 199 residues: Peroxiredoxin-1 (199 aa).

Residue S2 is modified to N-acetylserine. In terms of domain architecture, Thioredoxin spans 6 to 165 (AKIGYPAPNF…IIRLVQAFQF (160 aa)). The residue at position 7 (K7) is an N6-acetyllysine; alternate. K7 is covalently cross-linked (Glycyl lysine isopeptide (Lys-Gly) (interchain with G-Cter in SUMO2); alternate). K16 and K27 each carry N6-acetyllysine. S32 carries the phosphoserine modification. K35 carries the post-translational modification N6-acetyllysine; alternate. K35 is modified (N6-succinyllysine; alternate). Catalysis depends on C52, which acts as the Cysteine sulfenic acid (-SOH) intermediate. T90 is subject to Phosphothreonine. Residue K120 forms a Glycyl lysine isopeptide (Lys-Gly) (interchain with G-Cter in SUMO2) linkage. Position 136 is an N6-acetyllysine (K136). Residue K185 forms a Glycyl lysine isopeptide (Lys-Gly) (interchain with G-Cter in SUMO1) linkage. K197 is modified (N6-acetyllysine).

Belongs to the peroxiredoxin family. AhpC/Prx1 subfamily. Homodimer; disulfide-linked, upon oxidation. 5 homodimers assemble to form a ring-like decamer. Interacts with GDPD5; forms a mixed-disulfide with GDPD5. Interacts with SESN1 and SESN2. Interacts with FAM107A. Phosphorylated on Thr-90 during the M-phase, which leads to a decrease in enzymatic activity. Post-translationally, acetylation increases reducing activity and resistance to superoxidation. Deacetylated by HDAC6 which decreases reducing activity. Found in various tissues; high concentration in liver.

It localises to the cytoplasm. The catalysed reaction is a hydroperoxide + [thioredoxin]-dithiol = an alcohol + [thioredoxin]-disulfide + H2O. Its function is as follows. Thiol-specific peroxidase that catalyzes the reduction of hydrogen peroxide and organic hydroperoxides to water and alcohols, respectively. Plays a role in cell protection against oxidative stress by detoxifying peroxides and as sensor of hydrogen peroxide-mediated signaling events. Might participate in the signaling cascades of growth factors and tumor necrosis factor-alpha by regulating the intracellular concentrations of H(2)O(2). Reduces an intramolecular disulfide bond in GDPD5 that gates the ability to GDPD5 to drive postmitotic motor neuron differentiation. In Mus musculus (Mouse), this protein is Peroxiredoxin-1 (Prdx1).